The chain runs to 99 residues: Accessory protein p12I (99 aa).

The SH3-binding signature appears at 4–11 (RLLSPLSP). Residues 12-32 (LALTALLLFLLSPGEVSGLLL) form a helical membrane-spanning segment. The short motif at 33-38 (RPLPAP) is the SH3-binding element. The helical transmembrane segment at 48–68 (ILSNLLFLLFLPLFFSLPLLL) threads the bilayer. Short sequence motifs (SH3-binding) lie at residues 70-77 (PSLPITMR) and 88-93 (RAPSQP).

This sequence belongs to the HTLV-1 accessory protein p12I family. As to quaternary structure, p12I is a homodimer. Interacts with human CANX, CALR, ATP6V0C, IL2RB, IL2RG. Binds to MHC-I heavy chains HLA-A2, HLA-B7 and HLA-Cw4. Ubiquitinated; a fraction of P12I is degraded via the ubiquitin system.

The protein resides in the host endoplasmic reticulum membrane. It is found in the host Golgi apparatus. It localises to the host cis-Golgi network membrane. Its function is as follows. p12I is a modulator of T-lymphocyte proliferation and immune function and may contribute to establish a persistent infection. Binds and down-modulates cell surface expression of interleukin-2 receptors IL2RB and IL2RG. Also down-modulates cell surface MHC-I molecules by binding to free immature MHC-I heavy chains in the ER and targeting them to the proteasome for degradation. Binding to IL2RB mediates recruitment of JAK1 and JAK3. As a result of this interaction, p12I increases DNA-binding and transcriptional activity of STAT5. This is Accessory protein p12I from Homo sapiens (Human).